The sequence spans 194 residues: Imidazoleglycerol-phosphate dehydratase (194 aa).

This sequence belongs to the imidazoleglycerol-phosphate dehydratase family.

The protein resides in the cytoplasm. It carries out the reaction D-erythro-1-(imidazol-4-yl)glycerol 3-phosphate = 3-(imidazol-4-yl)-2-oxopropyl phosphate + H2O. It participates in amino-acid biosynthesis; L-histidine biosynthesis; L-histidine from 5-phospho-alpha-D-ribose 1-diphosphate: step 6/9. This Streptococcus mutans serotype c (strain ATCC 700610 / UA159) protein is Imidazoleglycerol-phosphate dehydratase.